The following is a 641-amino-acid chain: Protein zwilch (641 aa).

Serine 312 carries the phosphoserine modification.

Belongs to the ZWILCH family. In terms of assembly, component of the RZZ complex composed of rod, Zw10 and Zwilch.

The protein localises to the cytoplasm. It is found in the chromosome. Its subcellular location is the centromere. It localises to the kinetochore. The protein resides in the cytoskeleton. The protein localises to the spindle. Essential component of the mitotic checkpoint, which prevents cells from prematurely exiting mitosis. Required for the assembly of the dynein-dynactin, Mad2 complexes and spindly/CG15415 onto kinetochores. Its function related to the spindle assembly machinery is proposed to depend on its association in the RZZ complex. Failure to assemble the complex due to the absence of any one of its components, results in the incorrect redistribution of the remaining components to diverse membrane compartments. The protein is Protein zwilch of Drosophila melanogaster (Fruit fly).